Reading from the N-terminus, the 623-residue chain is ATP-dependent lipid A-core flippase (623 aa).

5 helical membrane-spanning segments follow: residues 66–86 (LVLA…LAVI), 103–123 (VWFL…CNFF), 190–210 (LVVI…TLII), 290–310 (LTPL…AVAL), and 317–337 (ALTV…FDPI). Positions 67 to 349 (VLAVLLMAGA…LTNLAGKMQK (283 aa)) constitute an ABC transmembrane type-1 domain. The 237-residue stretch at 382 to 618 (VEFRAVSHRF…NGLYASLYNM (237 aa)) folds into the ABC transporter domain. 416 to 423 (GRSGSGKT) provides a ligand contact to ATP.

The protein belongs to the ABC transporter superfamily. Lipid exporter (TC 3.A.1.106) family. As to quaternary structure, homodimer.

The protein resides in the cell inner membrane. The enzyme catalyses ATP + H2O + lipid A-core oligosaccharideSide 1 = ADP + phosphate + lipid A-core oligosaccharideSide 2.. Its function is as follows. Involved in lipopolysaccharide (LPS) biosynthesis. Translocates lipid A-core from the inner to the outer leaflet of the inner membrane. Transmembrane domains (TMD) form a pore in the inner membrane and the ATP-binding domain (NBD) is responsible for energy generation. In Bordetella bronchiseptica (strain ATCC BAA-588 / NCTC 13252 / RB50) (Alcaligenes bronchisepticus), this protein is ATP-dependent lipid A-core flippase.